Here is a 315-residue protein sequence, read N- to C-terminus: MKIIIFRVLTFFFVIFSVNVVAKEFTLDFSTAKTYVDSLNVIRSAIGTPLQTISSGGTSLLMIDSGSGDNLFAVDVRGIDPEEGRFNNLRLIVERNNLYVTGFVNRTNNVFYRFADFSHVTFPGTTAVTLSGDSSYTTLQRVAGISRTGMQINRHSLTTSYLDLMSHSGTSLTQSVARAMLRFVTVTAEALRFRQIQRGFRTTLDDLSGRSYVMTAEDVDLTLNWGRLSSVLPDYHGQDSVRVGRISFGSINAILGSVALILNCHHHASRVARMASDEFPSMCPADGRVRGITHNKILWDSSTLGAILMRRTISS.

Residues 1–22 form the signal peptide; sequence MKIIIFRVLTFFFVIFSVNVVA. An A1 region spans residues 23–273; that stretch reads KEFTLDFSTA…CHHHASRVAR (251 aa). E189 is an active-site residue. An intrachain disulfide couples C264 to C283. The interval 274 to 315 is A2; that stretch reads MASDEFPSMCPADGRVRGITHNKILWDSSTLGAILMRRTISS.

The protein belongs to the ribosome-inactivating protein family. Shiga-like toxin contains a single subunit A and five copies of subunit B.

Its subcellular location is the secreted. The enzyme catalyses Endohydrolysis of the N-glycosidic bond at one specific adenosine on the 28S rRNA.. Its function is as follows. The A subunit is responsible for inhibiting protein synthesis through the catalytic inactivation of 60S ribosomal subunits. After endocytosis, the A subunit is cleaved by furin in two fragments, A1 and A2: A1 is the catalytically active fragment, and A2 is essential for holotoxin assembly with the B subunits. This chain is Shiga-like toxin 1 subunit A (stxA), found in Escherichia coli (Bacteriophage H19B).